The following is a 288-amino-acid chain: Very-long-chain (3R)-3-hydroxyacyl-CoA dehydratase 1 (288 aa).

The segment at 1 to 59 (MGRLTEAAAAGGGASAARSAGPPPAPLPLSSTSPGCAAAMASSEEDGTNGGASEASDER) is disordered. The Cytoplasmic segment spans residues 1–75 (MGRLTEAAAA…RRLGLLATIW (75 aa)). The helical transmembrane segment at 76–95 (LTFYNIAMTAGWLVLAIAMV) threads the bilayer. The Lumenal portion of the chain corresponds to 96–114 (RFYMEKGTHKGLYKSIQKT). The helical transmembrane segment at 115–131 (LKFFQTFALLEIVHCLI) threads the bilayer. Residues 132–141 (GIVPTSVLVA) are Cytoplasmic-facing. A helical transmembrane segment spans residues 142-159 (GVQVSSRIFMVWLVTHSI). The Lumenal segment spans residues 160 to 165 (KPIQNE). Residues 166–180 (ESVVLFLVAWTVTEI) traverse the membrane as a helical segment. Topologically, residues 181-203 (TRYSFYTFSLLDHLPYFIKWARY) are cytoplasmic. The chain crosses the membrane as a helical span at residues 204-221 (NFFIILYPVGVAGELLTI). Catalysis depends on residues tyrosine 210 and glutamate 217. The Lumenal portion of the chain corresponds to 222–251 (YAALPYVKKTGMFSIRLPNKYNVSFDYYYF). N-linked (GlcNAc...) asparagine glycosylation occurs at asparagine 243. The helical transmembrane segment at 252 to 269 (LLITMASYIPLFPQLYFH) threads the bilayer. Residues 270–288 (MLRQRRKVLHGEVIVEKDD) lie on the Cytoplasmic side of the membrane.

It belongs to the very long-chain fatty acids dehydratase HACD family. In terms of assembly, may interact with enzymes of the ELO family (including ELOVL1); with those enzymes that mediate condensation, the first of the four steps of the reaction cycle responsible for fatty acids elongation, may be part of a larger fatty acids elongase complex. Interacts with TECR. In terms of processing, N-glycosylated. Expressed in heart.

It localises to the endoplasmic reticulum membrane. It carries out the reaction a very-long-chain (3R)-3-hydroxyacyl-CoA = a very-long-chain (2E)-enoyl-CoA + H2O. The catalysed reaction is (3R)-hydroxyhexadecanoyl-CoA = (2E)-hexadecenoyl-CoA + H2O. The enzyme catalyses (3R)-hydroxyoctadecanoyl-CoA = (2E)-octadecenoyl-CoA + H2O. It catalyses the reaction (3R)-hydroxyeicosanoyl-CoA = (2E)-eicosenoyl-CoA + H2O. It carries out the reaction (3R)-hydroxydocosanoyl-CoA = (2E)-docosenoyl-CoA + H2O. The catalysed reaction is (3R)-hydroxytetracosanoyl-CoA = (2E)-tetracosenoyl-CoA + H2O. The enzyme catalyses (3R)-hydroxyhexacosanoyl-CoA = (2E)-hexacosenoyl-CoA + H2O. It functions in the pathway lipid metabolism; fatty acid biosynthesis. Its function is as follows. Catalyzes the third of the four reactions of the long-chain fatty acids elongation cycle. This endoplasmic reticulum-bound enzymatic process, allows the addition of two carbons to the chain of long- and very long-chain fatty acids/VLCFAs per cycle. This enzyme catalyzes the dehydration of the 3-hydroxyacyl-CoA intermediate into trans-2,3-enoyl-CoA, within each cycle of fatty acid elongation. Thereby, it participates in the production of VLCFAs of different chain lengths that are involved in multiple biological processes as precursors of membrane lipids and lipid mediators. The protein is Very-long-chain (3R)-3-hydroxyacyl-CoA dehydratase 1 (HACD1) of Ovis aries (Sheep).